A 72-amino-acid polypeptide reads, in one-letter code: DNA-directed RNA polymerase subunit Rpo10 (72 aa).

Residues C7, C10, C54, and C55 each coordinate Zn(2+).

The protein belongs to the archaeal Rpo10/eukaryotic RPB10 RNA polymerase subunit family. Part of the RNA polymerase complex. It depends on Zn(2+) as a cofactor.

Its subcellular location is the cytoplasm. The enzyme catalyses RNA(n) + a ribonucleoside 5'-triphosphate = RNA(n+1) + diphosphate. In terms of biological role, DNA-dependent RNA polymerase (RNAP) catalyzes the transcription of DNA into RNA using the four ribonucleoside triphosphates as substrates. This Picrophilus torridus (strain ATCC 700027 / DSM 9790 / JCM 10055 / NBRC 100828 / KAW 2/3) protein is DNA-directed RNA polymerase subunit Rpo10.